A 160-amino-acid polypeptide reads, in one-letter code: Glyoxalase domain-containing protein 5 (160 aa).

A VOC domain is found at 33–153 (RLDHLVLTVR…DQNLIEVSNY (121 aa)).

This sequence belongs to the glyoxalase I family.

In Xenopus tropicalis (Western clawed frog), this protein is Glyoxalase domain-containing protein 5 (glod5).